A 318-amino-acid polypeptide reads, in one-letter code: Cytochrome f (318 aa).

The signal sequence occupies residues 1–34 (MQNRNFFEYPKNWIILLIPIFTTFNLLFTSDCYA). Residues Phe-35, Cys-55, Cys-58, and His-59 each contribute to the heme site. A helical membrane pass occupies residues 284 to 303 (LQGLLVFLFLVVLAQVFLVL).

Belongs to the cytochrome f family. As to quaternary structure, the 4 large subunits of the cytochrome b6-f complex are cytochrome b6, subunit IV (17 kDa polypeptide, petD), cytochrome f and the Rieske protein, while the 4 small subunits are PetG, PetL, PetM and PetN. The complex functions as a dimer. The cofactor is heme.

Its subcellular location is the plastid. The protein resides in the chloroplast thylakoid membrane. Functionally, component of the cytochrome b6-f complex, which mediates electron transfer between photosystem II (PSII) and photosystem I (PSI), cyclic electron flow around PSI, and state transitions. This Chaetosphaeridium globosum (Charophycean green alga) protein is Cytochrome f.